The primary structure comprises 284 residues: L-ribulose-5-phosphate 3-epimerase UlaE (284 aa).

The protein belongs to the L-ribulose-5-phosphate 3-epimerase family.

The catalysed reaction is L-ribulose 5-phosphate = L-xylulose 5-phosphate. The protein operates within cofactor degradation; L-ascorbate degradation; D-xylulose 5-phosphate from L-ascorbate: step 3/4. In terms of biological role, catalyzes the isomerization of L-xylulose-5-phosphate to L-ribulose-5-phosphate. Is involved in the anaerobic L-ascorbate utilization. This Escherichia coli O45:K1 (strain S88 / ExPEC) protein is L-ribulose-5-phosphate 3-epimerase UlaE.